The primary structure comprises 274 residues: HTH-type transcriptional regulator GadX (274 aa).

Residues 145–242 (TRVCTVINNN…GMTPTEYQER (98 aa)) form the HTH araC/xylS-type domain. 2 consecutive DNA-binding regions (H-T-H motif) follow at residues 162-183 (ARIA…REEE) and 209-232 (IKRV…RNYY).

Homodimer.

In terms of biological role, positively regulates the expression of about fifteen genes involved in acid resistance such as gadA, gadB and gadC. Depending on the conditions (growth phase and medium), can repress gadW. This is HTH-type transcriptional regulator GadX (gadX) from Shigella flexneri.